The following is a 196-amino-acid chain: ATP-dependent Clp protease proteolytic subunit (196 aa).

Ser-99 serves as the catalytic Nucleophile. His-124 is a catalytic residue.

This sequence belongs to the peptidase S14 family. Fourteen ClpP subunits assemble into 2 heptameric rings which stack back to back to give a disk-like structure with a central cavity, resembling the structure of eukaryotic proteasomes.

Its subcellular location is the cytoplasm. The enzyme catalyses Hydrolysis of proteins to small peptides in the presence of ATP and magnesium. alpha-casein is the usual test substrate. In the absence of ATP, only oligopeptides shorter than five residues are hydrolyzed (such as succinyl-Leu-Tyr-|-NHMec, and Leu-Tyr-Leu-|-Tyr-Trp, in which cleavage of the -Tyr-|-Leu- and -Tyr-|-Trp bonds also occurs).. Cleaves peptides in various proteins in a process that requires ATP hydrolysis. Has a chymotrypsin-like activity. Plays a major role in the degradation of misfolded proteins. This Campylobacter lari (strain RM2100 / D67 / ATCC BAA-1060) protein is ATP-dependent Clp protease proteolytic subunit.